Reading from the N-terminus, the 335-residue chain is Twinfilin (335 aa).

ADF-H domains are found at residues 4–140 and 176–316; these read SSGI…QHKL and GISF…NELH. A disordered region spans residues 307–335; it reads SEESIINELHPPKVEEKKAFSKPSRPGRK. Positions 316-325 are enriched in basic and acidic residues; that stretch reads HPPKVEEKKA.

The protein belongs to the actin-binding proteins ADF family. Twinfilin subfamily. As to quaternary structure, interacts with G-actin; ADP-actin form.

The protein resides in the cytoplasm. It is found in the cytoskeleton. The protein localises to the cell cortex. In terms of biological role, actin-binding protein involved in motile and morphological processes. Inhibits actin polymerization, likely by sequestering G-actin. This Dictyostelium discoideum (Social amoeba) protein is Twinfilin (twfA).